The sequence spans 199 residues: Recombination protein RecR (199 aa).

The C4-type zinc finger occupies 57–72 (CSICGNFTDRDPCRLC). The Toprim domain maps to 80 to 175 (SCICVVEEAR…KVTRLAYGLP (96 aa)).

It belongs to the RecR family.

Its function is as follows. May play a role in DNA repair. It seems to be involved in an RecBC-independent recombinational process of DNA repair. It may act with RecF and RecO. In Moorella thermoacetica (strain ATCC 39073 / JCM 9320), this protein is Recombination protein RecR.